We begin with the raw amino-acid sequence, 513 residues long: Probable E3 ubiquitin-protein ligase XBOS34 (513 aa).

3 ANK repeats span residues 39–69 (EGKT…NVNA), 75–104 (YCGT…NPFI), and 108–137 (DCHT…LFCG). 2 stretches are compositionally biased toward polar residues: residues 309 to 327 (ITTT…NSLN) and 335 to 355 (SAPS…STYN). Disordered stretches follow at residues 309 to 378 (ITTT…QNST) and 423 to 455 (SADG…SNSG). Over residues 361–378 (GTSSGQSSSKHNKSQNST) the composition is skewed to low complexity. Residues 436 to 446 (AENEGDAKPAE) are compositionally biased toward basic and acidic residues. The RING-type zinc finger occupies 462–501 (CVICLDAPVEGACIPCGHMAGCMSCLKDIESKKWGCPICR).

It catalyses the reaction S-ubiquitinyl-[E2 ubiquitin-conjugating enzyme]-L-cysteine + [acceptor protein]-L-lysine = [E2 ubiquitin-conjugating enzyme]-L-cysteine + N(6)-ubiquitinyl-[acceptor protein]-L-lysine.. The protein operates within protein modification; protein ubiquitination. This Oryza sativa subsp. japonica (Rice) protein is Probable E3 ubiquitin-protein ligase XBOS34 (XBOS34).